The primary structure comprises 289 residues: 4-diphosphocytidyl-2-C-methyl-D-erythritol kinase (289 aa).

Residue lysine 13 is part of the active site. Residue 101-111 (PMGGGLGGGSS) participates in ATP binding. The active site involves aspartate 143.

It belongs to the GHMP kinase family. IspE subfamily.

It catalyses the reaction 4-CDP-2-C-methyl-D-erythritol + ATP = 4-CDP-2-C-methyl-D-erythritol 2-phosphate + ADP + H(+). It participates in isoprenoid biosynthesis; isopentenyl diphosphate biosynthesis via DXP pathway; isopentenyl diphosphate from 1-deoxy-D-xylulose 5-phosphate: step 3/6. In terms of biological role, catalyzes the phosphorylation of the position 2 hydroxy group of 4-diphosphocytidyl-2C-methyl-D-erythritol. In Janthinobacterium sp. (strain Marseille) (Minibacterium massiliensis), this protein is 4-diphosphocytidyl-2-C-methyl-D-erythritol kinase.